The primary structure comprises 363 residues: GTPase Obg (363 aa).

The Obg domain maps to 1 to 159 (MKFIDEAKIY…LELRLELRVL (159 aa)). The 179-residue stretch at 160-338 (ADVGLLGLPN…LIYAISEALE (179 aa)) folds into the OBG-type G domain. Residues 166 to 173 (GLPNAGKS), 191 to 195 (FTTLH), 213 to 216 (DVPG), 284 to 287 (NKLD), and 319 to 321 (AAI) contribute to the GTP site. Mg(2+) is bound by residues Ser173 and Thr193. The disordered stretch occupies residues 342 to 363 (RPEIGDLDDNDEDSDEIIRDTE). The span at 346–356 (GDLDDNDEDSD) shows a compositional bias: acidic residues.

The protein belongs to the TRAFAC class OBG-HflX-like GTPase superfamily. OBG GTPase family. Monomer. The cofactor is Mg(2+).

It localises to the cytoplasm. An essential GTPase which binds GTP, GDP and possibly (p)ppGpp with moderate affinity, with high nucleotide exchange rates and a fairly low GTP hydrolysis rate. Plays a role in control of the cell cycle, stress response, ribosome biogenesis and in those bacteria that undergo differentiation, in morphogenesis control. The polypeptide is GTPase Obg (Dechloromonas aromatica (strain RCB)).